Here is a 622-residue protein sequence, read N- to C-terminus: Solute carrier family 2, facilitated glucose transporter member 12 (622 aa).

Positions 1–26 are disordered; sequence MVPVENTEGPNLLNQKGREAETEGSC. The Cytoplasmic segment spans residues 1-44; it reads MVPVENTEGPNLLNQKGREAETEGSCGASGGGHPACAGGPSMFT. Residues 45 to 65 form a helical membrane-spanning segment; sequence FLTSVTAAISGLLVGYELGLI. Over 66–84 the chain is Extracellular; the sequence is SGALLQIRTLLALTCHEQE. Residues 85 to 105 traverse the membrane as a helical segment; it reads MVVSSLLIGAFLASLTGGVLI. The Cytoplasmic segment spans residues 106–111; sequence DRYGRR. The helical transmembrane segment at 112 to 132 threads the bilayer; that stretch reads LAIILSSCLLGLGSLVLIMSL. Residues 133 to 141 lie on the Extracellular side of the membrane; it reads SYTLLIMGR. Residues 142-162 form a helical membrane-spanning segment; it reads VAIGVSISLSSIATCVYIAEI. Over 163–168 the chain is Cytoplasmic; that stretch reads APQHRR. The chain crosses the membrane as a helical span at residues 169–189; it reads GLLVSLNELMIVTGILFAYIS. Residues 190–201 lie on the Extracellular side of the membrane; the sequence is NYAFANISNGWK. Asn195 carries N-linked (GlcNAc...) asparagine glycosylation. A helical membrane pass occupies residues 202–222; that stretch reads YMFGLVIPLGVLQAIAMYFLP. The Cytoplasmic segment spans residues 223-282; that stretch reads PSPRFLVMKGQEESAGKVLRKLRVISDTTEELTLIKSSLKDEYQYSFWDLFRSKDNMRTR. Residues 283–303 traverse the membrane as a helical segment; sequence ILIGLTLVFFVQTTGQPNILF. The Extracellular segment spans residues 304–321; that stretch reads YASTVLKSVGFQSNEAAS. The helical transmembrane segment at 322–342 threads the bilayer; sequence LASTGVGVVKVVSTIPATLLV. Residues 343-349 are Cytoplasmic-facing; it reads DHIGSKT. A helical membrane pass occupies residues 350–370; it reads FLCIGSSVMSASLLTMGIVNL. Residues 371-471 lie on the Extracellular side of the membrane; that stretch reads NINMNFTNIC…PAAYKWLSLA (101 aa). N-linked (GlcNAc...) asparagine glycans are attached at residues Asn375, Asn387, Asn400, and Asn405. A helical transmembrane segment spans residues 472–492; it reads SLLVYVAAFSIGLGPMPWLVL. Residues 493-503 are Cytoplasmic-facing; that stretch reads SEIFPGGIRGR. Residues 504–524 traverse the membrane as a helical segment; it reads AMALTSSMNWGVNLLISLTFL. Residues 525–533 lie on the Extracellular side of the membrane; sequence TVTDLIGLS. The helical transmembrane segment at 534 to 554 threads the bilayer; that stretch reads WVCFIYTIMSLASLAFVVLFI. At 555–622 the chain is on the cytoplasmic side; sequence PETKGCSLEQ…GQSQRPSPDT (68 aa).

It belongs to the major facilitator superfamily. Sugar transporter (TC 2.A.1.1) family. Glucose transporter subfamily. Expressed in skeletal muscle, heart, brain, kidney, spleen, adipose tissues and to a lesser extent in small intestine and lung.

The protein localises to the cell membrane. Its subcellular location is the endomembrane system. It localises to the cytoplasm. The protein resides in the perinuclear region. The catalysed reaction is D-glucose(out) = D-glucose(in). In terms of biological role, insulin-independent facilitative glucose transporter. This chain is Solute carrier family 2, facilitated glucose transporter member 12, found in Mus musculus (Mouse).